A 405-amino-acid polypeptide reads, in one-letter code: BRCA1-A complex subunit Abraxas 1 (405 aa).

The region spanning 7 to 153 (SALLSGFVFG…CSTYRLEHAL (147 aa)) is the MPN domain. Residues 208–262 (SLQEVHKINEMYATLQEELKKMCSDVEVSERSVEKLLTEVSQLKEEINRKKQHKI) adopt a coiled-coil conformation. The disordered stretch occupies residues 365–405 (LHQDEEDCNQETKLALSSAETDEEALENPKDTNEYSYSPTF). At Ser402 the chain carries Phosphoserine. The pSXXF motif signature appears at 402-405 (SPTF).

It belongs to the FAM175 family. Abraxas subfamily. Component of the BRCA1-A complex. Component of the BRISC complex. Homodimer. Interacts directly (when phosphorylated at Ser-402) with BRCA1. The phosphorylated homodimer can interact directly with two BRCA1 chains, giving rise to a heterotetramer. In terms of processing, phosphorylation of Ser-402 of the pSXXF motif by ATM or ATR constitutes a specific recognition motif for the BRCT domain of BRCA1.

It is found in the nucleus. Involved in DNA damage response and double-strand break (DSB) repair. Component of the BRCA1-A complex, acting as a central scaffold protein that assembles the various components of the complex and mediates the recruitment of BRCA1. The BRCA1-A complex specifically recognizes 'Lys-63'-linked ubiquitinated histones H2A and H2AX at DNA lesion sites, leading to target the BRCA1-BARD1 heterodimer to sites of DNA damage at DSBs. This complex also possesses deubiquitinase activity that specifically removes 'Lys-63'-linked ubiquitin on histones H2A and H2AX. This Gallus gallus (Chicken) protein is BRCA1-A complex subunit Abraxas 1.